The sequence spans 393 residues: Dihydrolipoyllysine-residue succinyltransferase component of 2-oxoglutarate dehydrogenase complex (393 aa).

The region spanning 3 to 78 (RINILVPDLP…KSNQILGNIV (76 aa)) is the Lipoyl-binding domain. Lys44 is subject to N6-lipoyllysine. Residues His364 and Asp368 contribute to the active site.

It belongs to the 2-oxoacid dehydrogenase family. Forms a 24-polypeptide structural core with octahedral symmetry. Part of the 2-oxoglutarate dehydrogenase (OGDH) complex composed of E1 (2-oxoglutarate dehydrogenase), E2 (dihydrolipoamide succinyltransferase) and E3 (dihydrolipoamide dehydrogenase); the complex contains multiple copies of the three enzymatic components (E1, E2 and E3). (R)-lipoate serves as cofactor.

It carries out the reaction N(6)-[(R)-dihydrolipoyl]-L-lysyl-[protein] + succinyl-CoA = N(6)-[(R)-S(8)-succinyldihydrolipoyl]-L-lysyl-[protein] + CoA. The protein operates within amino-acid degradation; L-lysine degradation via saccharopine pathway; glutaryl-CoA from L-lysine: step 6/6. In terms of biological role, E2 component of the 2-oxoglutarate dehydrogenase (OGDH) complex which catalyzes the second step in the conversion of 2-oxoglutarate to succinyl-CoA and CO(2). The chain is Dihydrolipoyllysine-residue succinyltransferase component of 2-oxoglutarate dehydrogenase complex (sucB) from Buchnera aphidicola subsp. Schizaphis graminum (strain Sg).